The sequence spans 484 residues: Protein nucleotidyltransferase YdiU (484 aa).

Residues Gly81, Gly83, Arg84, Lys103, Asp115, Gly116, Arg166, and Arg173 each coordinate ATP. The active-site Proton acceptor is Asp244. Mg(2+) is bound by residues Asn245 and Asp254. ATP is bound at residue Asp254.

This sequence belongs to the SELO family. Mg(2+) is required as a cofactor. Requires Mn(2+) as cofactor.

It catalyses the reaction L-seryl-[protein] + ATP = 3-O-(5'-adenylyl)-L-seryl-[protein] + diphosphate. The enzyme catalyses L-threonyl-[protein] + ATP = 3-O-(5'-adenylyl)-L-threonyl-[protein] + diphosphate. It carries out the reaction L-tyrosyl-[protein] + ATP = O-(5'-adenylyl)-L-tyrosyl-[protein] + diphosphate. The catalysed reaction is L-histidyl-[protein] + UTP = N(tele)-(5'-uridylyl)-L-histidyl-[protein] + diphosphate. It catalyses the reaction L-seryl-[protein] + UTP = O-(5'-uridylyl)-L-seryl-[protein] + diphosphate. The enzyme catalyses L-tyrosyl-[protein] + UTP = O-(5'-uridylyl)-L-tyrosyl-[protein] + diphosphate. Functionally, nucleotidyltransferase involved in the post-translational modification of proteins. It can catalyze the addition of adenosine monophosphate (AMP) or uridine monophosphate (UMP) to a protein, resulting in modifications known as AMPylation and UMPylation. The protein is Protein nucleotidyltransferase YdiU of Shewanella baltica (strain OS195).